The primary structure comprises 346 residues: UPF0053 protein sll1254 (346 aa).

A run of 4 helical transmembrane segments spans residues 1–21 (MLEIVAAIFIVLLGSGICSCA), 58–78 (IGTIVVLNNIFNIVGSITIGA), 87–107 (AWMGVFSGILTLLIIVFGEII), and 121–141 (LLIAIPVRFLTLIFTPLVWLI). The CNNM transmembrane domain occupies 1-179 (MLEIVAAIFI…YKEGVIEGDE (179 aa)). CBS domains follow at residues 198–259 (MTPR…GYKT) and 263–320 (LARP…IVDE).

It belongs to the UPF0053 family.

It is found in the cell membrane. In Synechocystis sp. (strain ATCC 27184 / PCC 6803 / Kazusa), this protein is UPF0053 protein sll1254.